We begin with the raw amino-acid sequence, 430 residues long: MMLDKDSVKAIDVQTASLQSYISSPEKQKSLYKRTLFVVSISQIFGGAGLAAGVTVGALIAQQMLGTDAFAGLPSALFTLGSAGSALIVGRLSQRYGRRTGLSAGFMIGGLGAIGVIMAAIINSIFLLFISLLIYGAGTATNLQARYAGTDLANHKQRATAVSITMVFTTFGAVAGPSLVNVMGDFALSIGVPSLAGPFILAAAAYMLAGVVLFIMLRPDPLVIARTIEAANEEPGDKGHLAATEHTENKKGIIVGATVMVLTQIVMVAIMTMTPVHMRHHGHDLGAVGLVIGFHIGAMYLPSLVTGVLVDRLGRTAMAISSGTTLLLAGVIAAFAPGESMILLVIALSLLGLGWNFGLISGTALIVDSTDTATRAKTQGTVDVLIALSGAAGGALSGMIVAGSSYLALSLIGGILSLLLIPVVVWSRGR.

Transmembrane regions (helical) follow at residues 36-56, 69-89, 100-122, 126-148, 160-180, 197-217, 253-273, 285-305, 317-337, 340-360, 384-404, and 406-426; these read LFVV…GVTV, AFAG…ALIV, TGLS…AAII, FLLF…ARYA, TAVS…PSLV, GPFI…FIML, IIVG…IMTM, LGAV…PSLV, AMAI…AFAP, SMIL…FGLI, VLIA…VAGS, and YLAL…VVVW.

The protein belongs to the major facilitator superfamily.

Its subcellular location is the cell membrane. This is an uncharacterized protein from Bacillus subtilis (strain 168).